Here is a 369-residue protein sequence, read N- to C-terminus: Histone deacetylase 8 (369 aa).

The interval 5 to 316 (LLPVYIHSAE…WTYLTALIVG (312 aa)) is histone deacetylase. Position 93 (Asp-93) interacts with substrate. The active-site Proton acceptor is the His-135. Position 143 (Gly-143) interacts with substrate. A divalent metal cation contacts are provided by Asp-170, His-172, and Asp-259. Residue Tyr-298 participates in substrate binding.

The protein belongs to the histone deacetylase family. HD type 1 subfamily. Requires a divalent metal cation as cofactor.

It localises to the nucleus. The protein localises to the chromosome. Its subcellular location is the cytoplasm. The catalysed reaction is N(6)-acetyl-L-lysyl-[histone] + H2O = L-lysyl-[histone] + acetate. It carries out the reaction N(6)-acetyl-L-lysyl-[protein] + H2O = L-lysyl-[protein] + acetate. It catalyses the reaction N(6)-(2E)-butenoyl-L-lysyl-[protein] + H2O = (2E)-2-butenoate + L-lysyl-[protein]. Its activity is regulated as follows. Its activity is inhibited by trichostatin A (TSA) and butyrate, 2 well known histone deacetylase inhibitors. In terms of biological role, histone deacetylase that catalyzes the deacetylation of lysine residues on the N-terminal part of the core histones (H2A, H2B, H3 and H4). Histone deacetylation gives a tag for epigenetic repression and plays an important role in transcriptional regulation, cell cycle progression and developmental events. Histone deacetylases act via the formation of large multiprotein complexes. Also involved in the deacetylation of non-histone proteins. In addition to protein deacetylase activity, also has protein-lysine deacylase activity: acts as a protein decrotonylase by mediating decrotonylation ((2E)-butenoyl) of histones. The protein is Histone deacetylase 8 (hdac8) of Xenopus tropicalis (Western clawed frog).